The chain runs to 354 residues: Uroporphyrinogen decarboxylase (354 aa).

Residues 27–31, Asp77, Tyr154, Thr209, and His327 each bind substrate; that span reads RQAGR.

Belongs to the uroporphyrinogen decarboxylase family. As to quaternary structure, homodimer.

It localises to the cytoplasm. It catalyses the reaction uroporphyrinogen III + 4 H(+) = coproporphyrinogen III + 4 CO2. It functions in the pathway porphyrin-containing compound metabolism; protoporphyrin-IX biosynthesis; coproporphyrinogen-III from 5-aminolevulinate: step 4/4. Catalyzes the decarboxylation of four acetate groups of uroporphyrinogen-III to yield coproporphyrinogen-III. The polypeptide is Uroporphyrinogen decarboxylase (Escherichia coli (strain 55989 / EAEC)).